The chain runs to 130 residues: Glycoprotein hormone alpha-2 (130 aa).

The N-terminal stretch at 1–22 (MPMAPRVLLFCLLGLAVTEGHG) is a signal peptide. Cystine bridges form between C32-C90, C49-C104, C58-C120, and C62-C122. N38 and N82 each carry an N-linked (GlcNAc...) asparagine glycan.

Belongs to the glycoprotein hormones subunit alpha family. As to quaternary structure, heterodimer with GPHB5; this heterodimer interacts with thyroid-stimulating hormone receptor (TSHR), and hence stimulates cAMP production.

The protein resides in the secreted. Its function is as follows. Functions as a heterodimeric glycoprotein hormone with GPHB5 able to bind and activate the thyroid-stimulating hormone receptor (TSHR), leading to increased cAMP production. Plays a central role in controlling thyroid cell metabolism. The protein is Glycoprotein hormone alpha-2 (Gpha2) of Rattus norvegicus (Rat).